The chain runs to 838 residues: V-type proton ATPase 116 kDa subunit a 1 (838 aa).

The Cytoplasmic portion of the chain corresponds to 1 to 388; the sequence is MGELFRSEEM…DAYGIGTYRE (388 aa). Phosphothreonine is present on residues threonine 250 and threonine 360. Tyrosine 364 is modified (phosphotyrosine). A helical transmembrane segment spans residues 389-407; that stretch reads INPAPYTVITFPFLFAVMF. Over 408–409 the chain is Vacuolar; the sequence is GD. The chain crosses the membrane as a helical span at residues 410–426; it reads FGHGILMTLFAVWMVLR. The Cytoplasmic portion of the chain corresponds to 427-441; that stretch reads ESRILSQKNENEMFS. A helical membrane pass occupies residues 442–471; it reads MVFSGRYIILLMGLFSIYTGLIYNDCFSKS. Residues 472–535 lie on the Vacuolar side of the membrane; it reads LNIFGSSWSV…ATNKLTFLNS (64 aa). A helical membrane pass occupies residues 536 to 555; it reads FKMKMSVILGIIHMLFGVSL. The Cytoplasmic segment spans residues 556 to 573; sequence SLFNHIYFKKPLNIYFGF. Residues 574–594 traverse the membrane as a helical segment; it reads IPEIIFMSSLFGYLVILIFYK. The Vacuolar portion of the chain corresponds to 595–639; the sequence is WTAYDAHSSRNAPSLLIHFINMFLFSYPESGNAMLYSGQKGIQCF. Residues 640–659 form a helical membrane-spanning segment; the sequence is LIVVAMLCVPWMLLFKPLIL. At 660–725 the chain is on the cytoplasmic side; sequence RHQYLRKKHL…DTMVHQAIHT (66 aa). Residues 726–750 traverse the membrane as a helical segment; that stretch reads IEYCLGCISNTASYLRLWALSLAHA. Residues 751–771 lie on the Vacuolar side of the membrane; it reads QLSEVLWTMVIHIGLHVRSLA. A helical transmembrane segment spans residues 772-810; the sequence is GGLGLFFIFAAFATLTVAILLIMEGLSAFLHALRLHWVE. The Cytoplasmic segment spans residues 811–838; sequence FQNKFYTGTGFKFLPFSFEHIREGKFDE.

This sequence belongs to the V-ATPase 116 kDa subunit family. V-ATPase is a heteromultimeric enzyme made up of two complexes: the ATP-hydrolytic V1 complex and the proton translocation V0 complex. The V1 complex consists of three catalytic AB heterodimers that form a heterohexamer, three peripheral stalks each consisting of EG heterodimers, one central rotor including subunits D and F, and the regulatory subunits C and H. The proton translocation complex V0 consists of the proton transport subunit a, a ring of proteolipid subunits c9c'', rotary subunit d, subunits e and f, and the accessory subunits ATP6AP1/Ac45 and ATP6AP2/PRR. Interacts with SPAAR. In terms of tissue distribution, expressed in brain (at protein level). As to expression, expressed in heart, kidney, liver, spleen, and to a lesser extent in brain.

It is found in the cytoplasmic vesicle. The protein localises to the clathrin-coated vesicle membrane. Its subcellular location is the secretory vesicle. It localises to the synaptic vesicle membrane. The protein resides in the melanosome. Functionally, subunit of the V0 complex of vacuolar(H+)-ATPase (V-ATPase), a multisubunit enzyme composed of a peripheral complex (V1) that hydrolyzes ATP and a membrane integral complex (V0) that translocates protons. V-ATPase is responsible for the acidification of various organelles, such as lysosomes, endosomes, the trans-Golgi network, and secretory granules, including synaptic vesicles. In certain cell types, can be exported to the plasma membrane, where it is involved in the acidification of the extracellular environment. Required for assembly and activity of the vacuolar ATPase. Through its action on compartment acidification, plays an essential role in neuronal development in terms of integrity and connectivity of neurons. The chain is V-type proton ATPase 116 kDa subunit a 1 (Atp6v0a1) from Rattus norvegicus (Rat).